The sequence spans 353 residues: Photosystem II protein D1 (353 aa).

T2 is modified (N-acetylthreonine). The residue at position 2 (T2) is a Phosphothreonine. The next 3 helical transmembrane spans lie at 29-46 (YIGW…TATS), 118-133 (HFLL…EWEL), and 142-156 (WIAV…AATA). H118 contacts chlorophyll a. Y126 is a pheophytin a binding site. Positions 170 and 189 each coordinate [CaMn4O5] cluster. Residues 197 to 218 (FHMLGVAGVFGGSLFSAMHGSL) traverse the membrane as a helical segment. Chlorophyll a is bound at residue H198. A quinone is bound by residues H215 and 264 to 265 (SF). Residue H215 participates in Fe cation binding. Residue H272 coordinates Fe cation. Residues 274–288 (FLAAWPVVGIWFTAL) form a helical membrane-spanning segment. Residues H332, E333, D342, and A344 each coordinate [CaMn4O5] cluster. The propeptide occupies 345–353 (ALEVPSLNG).

Belongs to the reaction center PufL/M/PsbA/D family. In terms of assembly, PSII is composed of 1 copy each of membrane proteins PsbA, PsbB, PsbC, PsbD, PsbE, PsbF, PsbH, PsbI, PsbJ, PsbK, PsbL, PsbM, PsbT, PsbX, PsbY, PsbZ, Psb30/Ycf12, at least 3 peripheral proteins of the oxygen-evolving complex and a large number of cofactors. It forms dimeric complexes. It depends on The D1/D2 heterodimer binds P680, chlorophylls that are the primary electron donor of PSII, and subsequent electron acceptors. It shares a non-heme iron and each subunit binds pheophytin, quinone, additional chlorophylls, carotenoids and lipids. D1 provides most of the ligands for the Mn4-Ca-O5 cluster of the oxygen-evolving complex (OEC). There is also a Cl(-1) ion associated with D1 and D2, which is required for oxygen evolution. The PSII complex binds additional chlorophylls, carotenoids and specific lipids. as a cofactor. Post-translationally, tyr-161 forms a radical intermediate that is referred to as redox-active TyrZ, YZ or Y-Z. C-terminally processed by CTPA; processing is essential to allow assembly of the oxygen-evolving complex and thus photosynthetic growth.

Its subcellular location is the plastid. The protein localises to the chloroplast thylakoid membrane. It catalyses the reaction 2 a plastoquinone + 4 hnu + 2 H2O = 2 a plastoquinol + O2. In terms of biological role, photosystem II (PSII) is a light-driven water:plastoquinone oxidoreductase that uses light energy to abstract electrons from H(2)O, generating O(2) and a proton gradient subsequently used for ATP formation. It consists of a core antenna complex that captures photons, and an electron transfer chain that converts photonic excitation into a charge separation. The D1/D2 (PsbA/PsbD) reaction center heterodimer binds P680, the primary electron donor of PSII as well as several subsequent electron acceptors. This chain is Photosystem II protein D1, found in Lolium perenne (Perennial ryegrass).